The following is a 132-amino-acid chain: Large-conductance mechanosensitive channel (132 aa).

A run of 3 helical transmembrane segments spans residues 8 to 28, 30 to 50, and 67 to 87; these read FALK…GAFG, IVSS…LGGV, and GAFI…FLFI.

This sequence belongs to the MscL family. Homopentamer.

Its subcellular location is the cell membrane. Channel that opens in response to stretch forces in the membrane lipid bilayer. May participate in the regulation of osmotic pressure changes within the cell. This chain is Large-conductance mechanosensitive channel, found in Bacillus cytotoxicus (strain DSM 22905 / CIP 110041 / 391-98 / NVH 391-98).